A 315-amino-acid polypeptide reads, in one-letter code: D-erythronate dehydrogenase (315 aa).

Positions 119, 143, and 147 each coordinate NAD(+). Tyr-143 serves as the catalytic Proton acceptor.

Belongs to the NAD(P)-dependent epimerase/dehydratase family.

The enzyme catalyses D-erythronate + NAD(+) = 2-dehydro-D-erythronate + NADH + H(+). Its function is as follows. Catalyzes oxidation of D-erythronate to 2-oxo-tetronate. Can use either NAD(+) or NADP(+) as cosubstrate, with a preference for NAD(+). The polypeptide is D-erythronate dehydrogenase (Haemophilus influenzae (strain ATCC 51907 / DSM 11121 / KW20 / Rd)).